We begin with the raw amino-acid sequence, 314 residues long: Olfactory receptor 6C6 (314 aa).

Residues 1-24 (MKNKSMEIEFILLGLTDDPQLQIV) are Extracellular-facing. A glycan (N-linked (GlcNAc...) asparagine) is linked at Asn3. A helical transmembrane segment spans residues 25-45 (IFLFLFLNYTLSLMGNLIIII). Residues 46–63 (LTLLDPRLKTPMYFFLRN) are Cytoplasmic-facing. A helical membrane pass occupies residues 64-84 (FSFLEVIFTTVCIPRFLITIV). Residues 85 to 95 (TRDKTISYNNC) are Extracellular-facing. Cys95 and Cys177 form a disulfide bridge. Residues 96 to 116 (ATQLFFILLPGVTEFYLLAAM) form a helical membrane-spanning segment. The Cytoplasmic segment spans residues 117–141 (SYDRYVAICKPLHYPIIMSSKVCYQ). A helical membrane pass occupies residues 142-162 (LVLSSWVTGFLIIFPPLVMGL). The Extracellular portion of the chain corresponds to 163 to 199 (KLDFCASKTIDHFMCETSPILQISCTDTHVLELMSFT). A helical membrane pass occupies residues 200-220 (LAVVTLVVTLVLVILSYTCII). At 221–237 (KTILKFSSAQQRNKAFS) the chain is on the cytoplasmic side. The chain crosses the membrane as a helical span at residues 238–258 (TCTSHMIVVSMTYGSCIFMYI). Residues 259 to 269 (KPSAKERVTVS) lie on the Extracellular side of the membrane. The chain crosses the membrane as a helical span at residues 270–290 (KGVALLYTSIAPLLNPFIYTL). Topologically, residues 291–314 (RNQQVKEVFWDVLQKNLCFSKRPF) are cytoplasmic.

This sequence belongs to the G-protein coupled receptor 1 family.

The protein localises to the cell membrane. In terms of biological role, odorant receptor. The polypeptide is Olfactory receptor 6C6 (OR6C6) (Homo sapiens (Human)).